A 267-amino-acid chain; its full sequence is tRNA (guanine-N(1)-)-methyltransferase (267 aa).

Residues G119 and 139 to 144 (IGDYVL) contribute to the S-adenosyl-L-methionine site.

The protein belongs to the RNA methyltransferase TrmD family. As to quaternary structure, homodimer.

It localises to the cytoplasm. The enzyme catalyses guanosine(37) in tRNA + S-adenosyl-L-methionine = N(1)-methylguanosine(37) in tRNA + S-adenosyl-L-homocysteine + H(+). Its function is as follows. Specifically methylates guanosine-37 in various tRNAs. This Chromohalobacter salexigens (strain ATCC BAA-138 / DSM 3043 / CIP 106854 / NCIMB 13768 / 1H11) protein is tRNA (guanine-N(1)-)-methyltransferase.